Here is a 526-residue protein sequence, read N- to C-terminus: Outer capsid protein VP5 (526 aa).

Residues 1–42 (MGKIIKSLSRFGKKVGNALTSNTAKKIYSTIGKAAERFAESE) form an involved in membrane permeabilization region.

The protein belongs to the orbivirus VP5 family.

The protein resides in the virion. VP5 protein is one of the two proteins (with VP2) which constitute the virus particle outer capsid. Acts as a membrane permeabilization protein that mediates release of viral particles from endosomal compartments into the cytoplasm. Permeabilization activity is probably negatively regulated by VP2 and is triggered by endosomal degradation of VP2 and exposure to low pH. In Antilocapra americana (Pronghorn), this protein is Outer capsid protein VP5 (Segment-6).